The sequence spans 405 residues: MLIVQKYGGTSMGSIERIHNVAQRVLESVKLGHQVVVVVSAMSGETDRLLEFGKNFSHNPNKREMDRIVSAGEWISSAALSMALERYGHRAISLSGKEAGILTSSHFQNAVIQSIDTQRITELLEKNYIVVIAGFQGADIQGETTTLGRGGSDLSAVALAGALKAHLCEIYTDVDGVYTTDPRIEEKAQKIAQISYDEMLELASMGAKVLLNRSVELAKKLSVKLVTRNSFNHSEGTLIVAEKDFKGERMETPIVSGIALDKNQARVSMEGVEDRPGIAAEIFGALAEYRINVDMIVQTIGRDGKTDLDFTIVKTQIEETKQALKPFLAQMDSIDYDENIAKVSIVGVGMKSHSGVASIAFKALAKDNINIMMISTSEIKISVLIDIKYAELAVRTLHAVYQLDQ.

ACT domains lie at Val-267–Ser-344 and Ile-345–Gln-405.

Belongs to the aspartokinase family.

It carries out the reaction L-aspartate + ATP = 4-phospho-L-aspartate + ADP. The protein operates within amino-acid biosynthesis; L-lysine biosynthesis via DAP pathway; (S)-tetrahydrodipicolinate from L-aspartate: step 1/4. It participates in amino-acid biosynthesis; L-methionine biosynthesis via de novo pathway; L-homoserine from L-aspartate: step 1/3. Its pathway is amino-acid biosynthesis; L-threonine biosynthesis; L-threonine from L-aspartate: step 1/5. In Helicobacter pylori (strain J99 / ATCC 700824) (Campylobacter pylori J99), this protein is Aspartokinase (lysC).